The primary structure comprises 178 residues: ATP synthase subunit delta (178 aa).

The protein belongs to the ATPase delta chain family. In terms of assembly, F-type ATPases have 2 components, F(1) - the catalytic core - and F(0) - the membrane proton channel. F(1) has five subunits: alpha(3), beta(3), gamma(1), delta(1), epsilon(1). F(0) has three main subunits: a(1), b(2) and c(10-14). The alpha and beta chains form an alternating ring which encloses part of the gamma chain. F(1) is attached to F(0) by a central stalk formed by the gamma and epsilon chains, while a peripheral stalk is formed by the delta and b chains.

The protein resides in the cell inner membrane. Its function is as follows. F(1)F(0) ATP synthase produces ATP from ADP in the presence of a proton or sodium gradient. F-type ATPases consist of two structural domains, F(1) containing the extramembraneous catalytic core and F(0) containing the membrane proton channel, linked together by a central stalk and a peripheral stalk. During catalysis, ATP synthesis in the catalytic domain of F(1) is coupled via a rotary mechanism of the central stalk subunits to proton translocation. Functionally, this protein is part of the stalk that links CF(0) to CF(1). It either transmits conformational changes from CF(0) to CF(1) or is implicated in proton conduction. The chain is ATP synthase subunit delta from Stutzerimonas stutzeri (strain A1501) (Pseudomonas stutzeri).